An 867-amino-acid chain; its full sequence is Protein translocase subunit SecA 1 (867 aa).

Residues Gln86, 104–108, and Asp493 contribute to the ATP site; that span reads GEGKT.

The protein belongs to the SecA family. Monomer and homodimer. Part of the essential Sec protein translocation apparatus which comprises SecA, SecYEG and auxiliary proteins SecDF. Other proteins may also be involved.

It is found in the cell membrane. The protein localises to the cytoplasm. The enzyme catalyses ATP + H2O + cellular proteinSide 1 = ADP + phosphate + cellular proteinSide 2.. Part of the Sec protein translocase complex. Interacts with the SecYEG preprotein conducting channel. Has a central role in coupling the hydrolysis of ATP to the transfer of proteins into and across the cell membrane, serving as an ATP-driven molecular motor driving the stepwise translocation of polypeptide chains across the membrane. This is Protein translocase subunit SecA 1 from Corynebacterium jeikeium (strain K411).